Consider the following 306-residue polypeptide: Probable L,D-transpeptidase YbiS (306 aa).

Residues Met-1 to Ala-24 form the signal peptide. The region spanning Glu-99–Ile-234 is the L,D-TPase catalytic domain. The Proton donor/acceptor role is filled by His-194. Catalysis depends on Cys-210, which acts as the Nucleophile.

Belongs to the YkuD family.

It is found in the periplasm. The protein operates within cell wall biogenesis; peptidoglycan biosynthesis. Responsible, at least in part, for anchoring of the major outer membrane lipoprotein (Lpp) to the peptidoglycan via a meso-diaminopimelyl-L-Lys- bond on the terminal residue of Lpp. The polypeptide is Probable L,D-transpeptidase YbiS (ybiS) (Escherichia coli O6:H1 (strain CFT073 / ATCC 700928 / UPEC)).